The chain runs to 108 residues: Iron-sulfur cluster assembly protein CyaY (108 aa).

This sequence belongs to the frataxin family.

In terms of biological role, involved in iron-sulfur (Fe-S) cluster assembly. May act as a regulator of Fe-S biogenesis. The protein is Iron-sulfur cluster assembly protein CyaY of Pseudomonas aeruginosa (strain ATCC 15692 / DSM 22644 / CIP 104116 / JCM 14847 / LMG 12228 / 1C / PRS 101 / PAO1).